The primary structure comprises 419 residues: Hyaluronidase-3 (419 aa).

Residues 1–16 (MTMQLGLALVLGVAMC) form the signal peptide. 5 disulfides stabilise this stretch: Cys-42-Cys-331, Cys-205-Cys-220, Cys-356-Cys-367, Cys-361-Cys-395, and Cys-397-Cys-406. A glycan (N-linked (GlcNAc...) asparagine) is linked at Asn-69. The active-site Proton donor is the Glu-129. N-linked (GlcNAc...) asparagine glycosylation occurs at Asn-215. In terms of domain architecture, EGF-like spans 352-407 (AAMACSHQRCHGHGRCAWQDPGQLKVFLHLHPGGSPGAWESFSCRCYWGWAGPTCQ).

Belongs to the glycosyl hydrolase 56 family. Post-translationally, N-glycosylated. In terms of tissue distribution, highly expressed in bladder, spleen and liver. Expressed at low levels in the kidney.

The protein localises to the secreted. Its subcellular location is the cell membrane. It localises to the cytoplasmic vesicle. It is found in the secretory vesicle. The protein resides in the acrosome. The protein localises to the endoplasmic reticulum. Its subcellular location is the early endosome. It carries out the reaction Random hydrolysis of (1-&gt;4)-linkages between N-acetyl-beta-D-glucosamine and D-glucuronate residues in hyaluronate.. Functionally, facilitates sperm penetration into the layer of cumulus cells surrounding the egg by digesting hyaluronic acid. Involved in induction of the acrosome reaction in the sperm. Involved in follicular atresia, the breakdown of immature ovarian follicles that are not selected to ovulate. Induces ovarian granulosa cell apoptosis, possibly via apoptotic signaling pathway involving CASP8 and CASP3 activation, and poly(ADP-ribose) polymerase (PARP) cleavage. Has no hyaluronidase activity in embryonic fibroblasts in vitro. Has no hyaluronidase activity in granulosa cells in vitro. The chain is Hyaluronidase-3 (HYAL3) from Sus scrofa (Pig).